The chain runs to 259 residues: UPF0246 protein PputGB1_4560 (259 aa).

It belongs to the UPF0246 family.

The chain is UPF0246 protein PputGB1_4560 from Pseudomonas putida (strain GB-1).